The following is a 377-amino-acid chain: uncharacterized protein (377 aa).

Residues 1-22 (MKFKYGTVVLGSFLGLSVVLAA) form the signal peptide. C23 carries N-palmitoyl cysteine lipidation. The S-diacylglycerol cysteine moiety is linked to residue C23. A disordered region spans residues 217 to 260 (AKANGETNQKGRKAAKSNKTALVQLKNGADTTTNEENKDTKTSD). A compositionally biased stretch (basic and acidic residues) spans 251–260 (EENKDTKTSD).

This sequence belongs to the MG185/MG260 family.

The protein localises to the cell membrane. This is an uncharacterized protein from Mycoplasma pneumoniae (strain ATCC 29342 / M129 / Subtype 1) (Mycoplasmoides pneumoniae).